A 427-amino-acid polypeptide reads, in one-letter code: Glutamyl-tRNA reductase (427 aa).

Residues 50–53 (TCNR), S110, 115–117 (ETQ), and Q121 contribute to the substrate site. C51 serves as the catalytic Nucleophile. An NADP(+)-binding site is contributed by 190–195 (GAGEMG).

This sequence belongs to the glutamyl-tRNA reductase family. As to quaternary structure, homodimer.

The catalysed reaction is (S)-4-amino-5-oxopentanoate + tRNA(Glu) + NADP(+) = L-glutamyl-tRNA(Glu) + NADPH + H(+). It functions in the pathway porphyrin-containing compound metabolism; protoporphyrin-IX biosynthesis; 5-aminolevulinate from L-glutamyl-tRNA(Glu): step 1/2. Functionally, catalyzes the NADPH-dependent reduction of glutamyl-tRNA(Glu) to glutamate 1-semialdehyde (GSA). This chain is Glutamyl-tRNA reductase, found in Campylobacter concisus (strain 13826).